The following is a 199-amino-acid chain: Peroxiredoxin 2 (199 aa).

One can recognise a Thioredoxin domain in the interval 8-166 (AFIGQPAPNF…TLRLIQAFQF (159 aa)). C53 functions as the Cysteine sulfenic acid (-SOH) intermediate in the catalytic mechanism.

It belongs to the peroxiredoxin family. AhpC/Prx1 subfamily. In terms of assembly, homodimer; disulfide-linked, upon oxidation.

It carries out the reaction a hydroperoxide + [thioredoxin]-dithiol = an alcohol + [thioredoxin]-disulfide + H2O. Its function is as follows. Thiol-specific peroxidase that catalyzes the reduction of hydrogen peroxide and organic hydroperoxides to water and alcohols, respectively. Plays a role in cell protection against oxidative stress by detoxifying peroxides and as sensor of hydrogen peroxide-mediated signaling events. This Brugia malayi (Filarial nematode worm) protein is Peroxiredoxin 2 (tsa-2).